A 256-amino-acid chain; its full sequence is Imidazole glycerol phosphate synthase subunit HisF (256 aa).

Residues Asp11 and Asp130 contribute to the active site.

This sequence belongs to the HisA/HisF family. Heterodimer of HisH and HisF.

The protein resides in the cytoplasm. The enzyme catalyses 5-[(5-phospho-1-deoxy-D-ribulos-1-ylimino)methylamino]-1-(5-phospho-beta-D-ribosyl)imidazole-4-carboxamide + L-glutamine = D-erythro-1-(imidazol-4-yl)glycerol 3-phosphate + 5-amino-1-(5-phospho-beta-D-ribosyl)imidazole-4-carboxamide + L-glutamate + H(+). The protein operates within amino-acid biosynthesis; L-histidine biosynthesis; L-histidine from 5-phospho-alpha-D-ribose 1-diphosphate: step 5/9. In terms of biological role, IGPS catalyzes the conversion of PRFAR and glutamine to IGP, AICAR and glutamate. The HisF subunit catalyzes the cyclization activity that produces IGP and AICAR from PRFAR using the ammonia provided by the HisH subunit. This chain is Imidazole glycerol phosphate synthase subunit HisF, found in Cupriavidus pinatubonensis (strain JMP 134 / LMG 1197) (Cupriavidus necator (strain JMP 134)).